Here is a 237-residue protein sequence, read N- to C-terminus: Purine nucleoside phosphorylase DeoD-type (237 aa).

Residue histidine 4 coordinates a purine D-ribonucleoside. Residues glycine 20, arginine 24, arginine 43, and 87–90 (RVGS) contribute to the phosphate site. Residues 179 to 181 (EME) and 203 to 204 (SD) contribute to the a purine D-ribonucleoside site. Aspartate 204 (proton donor) is an active-site residue.

It belongs to the PNP/UDP phosphorylase family. Homohexamer; trimer of homodimers.

The enzyme catalyses a purine D-ribonucleoside + phosphate = a purine nucleobase + alpha-D-ribose 1-phosphate. It carries out the reaction a purine 2'-deoxy-D-ribonucleoside + phosphate = a purine nucleobase + 2-deoxy-alpha-D-ribose 1-phosphate. Its function is as follows. Catalyzes the reversible phosphorolytic breakdown of the N-glycosidic bond in the beta-(deoxy)ribonucleoside molecules, with the formation of the corresponding free purine bases and pentose-1-phosphate. In Dichelobacter nodosus (strain VCS1703A), this protein is Purine nucleoside phosphorylase DeoD-type.